The following is a 196-amino-acid chain: MSLALTNLLRQARTGLLLLLVATAGLGLVYPLAVFAVGRLVPARADGQVVAVDGQPVGSRLIGQEFPGEQWFQPRPSAAGDGYDPTASGASNLGPESTDLLKAVEERRAAVAAADGTAPVDVAPDALTASGSGLDPHVSPENARRQVARVAAARGLSEQRVAALVAEHTRGRALGFLGEPTVNVLELNLALRSAAP.

The helical transmembrane segment at 17 to 37 (LLLLVATAGLGLVYPLAVFAV) threads the bilayer. Positions 73–93 (QPRPSAAGDGYDPTASGASNL) are disordered.

The protein belongs to the KdpC family. As to quaternary structure, the system is composed of three essential subunits: KdpA, KdpB and KdpC.

The protein localises to the cell membrane. Its function is as follows. Part of the high-affinity ATP-driven potassium transport (or Kdp) system, which catalyzes the hydrolysis of ATP coupled with the electrogenic transport of potassium into the cytoplasm. This subunit acts as a catalytic chaperone that increases the ATP-binding affinity of the ATP-hydrolyzing subunit KdpB by the formation of a transient KdpB/KdpC/ATP ternary complex. The protein is Potassium-transporting ATPase KdpC subunit of Kineococcus radiotolerans (strain ATCC BAA-149 / DSM 14245 / SRS30216).